Here is a 170-residue protein sequence, read N- to C-terminus: MSVTLHTDLGDIKIEVFCEAVPKTAENFLALCASGYYDNNTFHRNIPGFMIQVHEHLHTGDPTGTGKGGNSIWGKKFNDEIRSTLKHNSRGIVSMANSGPNTNGSQFFITYAKHPHLDTKYTVFGKVIDGADSTLDMMEKVPVDEKHRPLQEFRIKSVTIHANPIADKQL.

Positions 1-160 (MSVTLHTDLG…QEFRIKSVTI (160 aa)) constitute a PPIase cyclophilin-type domain.

The protein belongs to the cyclophilin-type PPIase family. PPIL3 subfamily.

The catalysed reaction is [protein]-peptidylproline (omega=180) = [protein]-peptidylproline (omega=0). PPIases accelerate the folding of proteins. It catalyzes the cis-trans isomerization of proline imidic peptide bonds in oligopeptides. This is Peptidyl-prolyl cis-trans isomerase-like 3 (cyp4) from Rhizopus delemar (strain RA 99-880 / ATCC MYA-4621 / FGSC 9543 / NRRL 43880) (Mucormycosis agent).